The sequence spans 456 residues: Neurexin-3-beta (456 aa).

The signal sequence occupies residues 1–35; that stretch reads MHLRIHARRNPPRRPAWTLGIWSLFWGCIVSSVWS. Over 36-381 the chain is Extracellular; sequence SSNVASSSSS…EVIRESSSTT (346 aa). Residues 41–63 are disordered; sequence SSSSSPGSHSQHEHHFHGSKHHS. A compositionally biased stretch (basic residues) spans 52–63; it reads HEHHFHGSKHHS. The Laminin G-like domain maps to 82–282; it reads ATYIFGKSGG…NPNIKINGSV (201 aa). Ca(2+)-binding residues include Asp134 and Ile151. Asn181 carries an N-linked (GlcNAc...) asparagine glycan. Positions 233 and 235 each coordinate Ca(2+). Residues Asn279 and Asn323 are each glycosylated (N-linked (GlcNAc...) asparagine). The disordered stretch occupies residues 316-340; the sequence is ATTTTRKNRSTASIQPTSDDLVSSA. The span at 325-340 shows a compositional bias: polar residues; it reads STASIQPTSDDLVSSA. Ser339 is a glycosylation site (O-linked (Xyl...) (heparan sulfate) serine). The helical transmembrane segment at 382–402 threads the bilayer; that stretch reads GMVVGIVAAAALCILILLYAM. The Cytoplasmic portion of the chain corresponds to 403–456; that stretch reads YKYRNRDEGSYQVDETRNYISNSAQSNGTLLKEKPPSSKGGHKKQKNKDKEYYV. Residues 424-456 form a disordered region; the sequence is NSAQSNGTLLKEKPPSSKGGHKKQKNKDKEYYV.

It belongs to the neurexin family. Weakly interacts with CBLN1 and CBLN2. Very weak binding, if any, to CBLN4. Specific isoforms bind neuroligins NLGN1, NLGN2 and NLGN3. Interacts with CLSTN3. Post-translationally, processed by alpha-secretase leading to the formation of an extracellular soluble protein as well as a C-terminal membrane-embedded fragment (CTF). Proteolysis of these CTFs by gamma-secretase releases intracellular domains (ICDs) and extracellular peptides. In terms of processing, O-glycosylated; contains heparan sulfate. Heparan sulfate attachment is required for synapse development by mediating interactions with neuroligins.

It is found in the presynaptic cell membrane. It localises to the secreted. Neuronal cell surface protein that may be involved in cell recognition and cell adhesion. May mediate intracellular signaling. Functions as part of a trans-synaptic complex by binding to cerebellins and postsynaptic GRID1. This interaction helps regulate the activity of NMDA and AMPA receptors at hippocampal synapses without affecting synapse formation. NRXN3B-CBLN2-GRID1 complex transduce presynaptic signals into postsynaptic AMPAR response. The chain is Neurexin-3-beta (NRXN3) from Bos taurus (Bovine).